The primary structure comprises 361 residues: SUN domain-containing protein 3 (361 aa).

Residues 1 to 47 (MSGKAKARRAAMFFRGCSEDASGSTSGSTLLSEDENPDTNGVTRSWK) lie on the Nuclear side of the membrane. A disordered region spans residues 19 to 38 (EDASGSTSGSTLLSEDENPD). A compositionally biased stretch (low complexity) spans 22-31 (SGSTSGSTLL). Residues 48-69 (IILSTMFTLTFLLVGLLSHQWL) traverse the membrane as a helical segment. Residues 70–361 (KETEVPQKSR…RVHGTPGKHI (292 aa)) are Perinuclear space-facing. Positions 103 to 129 (KEQLELLKKESQTLENNFHKILLLIEQ) form a coiled coil. The SUN domain occupies 197 to 358 (GASIIEAGTS…YRFRVHGTPG (162 aa)).

Self-associates. Interacts with SYNE1 and SPAG4/SUN4. Proposed to form a spermatogenesis-specific LINC complex with SYNE1 during sperm head formation possibly implicating a SUN domain-based heterotrimer with SPAG4/SUN4 associating with SYNE1.

It localises to the membrane. It is found in the nucleus envelope. The protein resides in the nucleus inner membrane. Functionally, as a probable component of the LINC (LInker of Nucleoskeleton and Cytoskeleton) complex, involved in the connection between the nuclear lamina and the cytoskeleton. The nucleocytoplasmic interactions established by the LINC complex play an important role in the transmission of mechanical forces across the nuclear envelope and in nuclear movement and positioning. May be involved in nuclear remodeling during sperm head formation in spermatogenesis. A probable SUN3:SYNE1 LINC complex may tether spermatid nuclei to posterior cytoskeletal structures such as the manchette. In Macaca fascicularis (Crab-eating macaque), this protein is SUN domain-containing protein 3 (SUN3).